Consider the following 546-residue polypeptide: CTP synthase (546 aa).

The interval 1-266 (MTTNYIFVTG…DELVCKRFGI (266 aa)) is amidoligase domain. S14 provides a ligand contact to CTP. S14 is a UTP binding site. ATP-binding positions include 15–20 (SLGKGI) and D72. Mg(2+) is bound by residues D72 and E140. CTP contacts are provided by residues 147 to 149 (DIE), 187 to 192 (KTKPTQ), and K223. UTP contacts are provided by residues 187-192 (KTKPTQ) and K223. Residue 239-241 (RDV) participates in ATP binding. The 252-residue stretch at 291–542 (TIGMVGKYIE…VKAAGEFQRG (252 aa)) folds into the Glutamine amidotransferase type-1 domain. G352 is an L-glutamine binding site. The Nucleophile; for glutamine hydrolysis role is filled by C379. Residues 380-383 (LGMQ), E403, and R470 each bind L-glutamine. Catalysis depends on residues H515 and E517.

This sequence belongs to the CTP synthase family. As to quaternary structure, homotetramer.

It carries out the reaction UTP + L-glutamine + ATP + H2O = CTP + L-glutamate + ADP + phosphate + 2 H(+). The enzyme catalyses L-glutamine + H2O = L-glutamate + NH4(+). The catalysed reaction is UTP + NH4(+) + ATP = CTP + ADP + phosphate + 2 H(+). It participates in pyrimidine metabolism; CTP biosynthesis via de novo pathway; CTP from UDP: step 2/2. Allosterically activated by GTP, when glutamine is the substrate; GTP has no effect on the reaction when ammonia is the substrate. The allosteric effector GTP functions by stabilizing the protein conformation that binds the tetrahedral intermediate(s) formed during glutamine hydrolysis. Inhibited by the product CTP, via allosteric rather than competitive inhibition. In terms of biological role, catalyzes the ATP-dependent amination of UTP to CTP with either L-glutamine or ammonia as the source of nitrogen. Regulates intracellular CTP levels through interactions with the four ribonucleotide triphosphates. This Vibrio atlanticus (strain LGP32) (Vibrio splendidus (strain Mel32)) protein is CTP synthase.